The sequence spans 273 residues: HMP-PP phosphatase (273 aa).

The Nucleophile role is filled by aspartate 8. Positions 8, 10, and 212 each coordinate Mg(2+).

It belongs to the HAD-like hydrolase superfamily. Cof family. Mg(2+) is required as a cofactor.

It catalyses the reaction 4-amino-2-methyl-5-(diphosphooxymethyl)pyrimidine + H2O = 4-amino-2-methyl-5-(phosphooxymethyl)pyrimidine + phosphate + H(+). Functionally, catalyzes the hydrolysis of 4-amino-2-methyl-5-hydroxymethylpyrimidine pyrophosphate (HMP-PP) to 4-amino-2-methyl-5-hydroxymethylpyrimidine phosphate (HMP-P). This Yersinia pestis bv. Antiqua (strain Antiqua) protein is HMP-PP phosphatase.